Consider the following 270-residue polypeptide: NAD kinase (270 aa).

Residue D49 is the Proton acceptor of the active site. NAD(+) is bound by residues 49–50 (DG), R54, 126–127 (NE), R152, D154, 165–170 (TAYNKS), A189, and Q227.

Belongs to the NAD kinase family. It depends on a divalent metal cation as a cofactor.

Its subcellular location is the cytoplasm. The catalysed reaction is NAD(+) + ATP = ADP + NADP(+) + H(+). Functionally, involved in the regulation of the intracellular balance of NAD and NADP, and is a key enzyme in the biosynthesis of NADP. Catalyzes specifically the phosphorylation on 2'-hydroxyl of the adenosine moiety of NAD to yield NADP. The polypeptide is NAD kinase (Lactococcus lactis subsp. lactis (strain IL1403) (Streptococcus lactis)).